A 176-amino-acid chain; its full sequence is Shikimate kinase (176 aa).

ATP is bound at residue 14–19 (GAGKSS). Ser-18 contributes to the Mg(2+) binding site. Positions 36, 60, and 82 each coordinate substrate. Arg-120 lines the ATP pocket. Arg-138 is a binding site for substrate.

Belongs to the shikimate kinase family. As to quaternary structure, monomer. It depends on Mg(2+) as a cofactor.

The protein resides in the cytoplasm. The catalysed reaction is shikimate + ATP = 3-phosphoshikimate + ADP + H(+). It functions in the pathway metabolic intermediate biosynthesis; chorismate biosynthesis; chorismate from D-erythrose 4-phosphate and phosphoenolpyruvate: step 5/7. In terms of biological role, catalyzes the specific phosphorylation of the 3-hydroxyl group of shikimic acid using ATP as a cosubstrate. The sequence is that of Shikimate kinase from Dehalococcoides mccartyi (strain ATCC BAA-2100 / JCM 16839 / KCTC 5957 / BAV1).